A 293-amino-acid polypeptide reads, in one-letter code: RNA-binding Raly-like protein (293 aa).

Positions 21–92 (SRVFIGNLNT…QPLDINMAGE (72 aa)) constitute an RRM domain. Disordered stretches follow at residues 159–195 (PRAA…KLKS) and 245–293 (QDEC…LQIK). Over residues 176 to 192 (KGGSRSAVSGSSSSGSK) the composition is skewed to low complexity. Positions 192–254 (KLKSDELQTI…QDECVSENAD (63 aa)) form a coiled coil. Residues 259–284 (EPAEGAPDADGEELTDGVEEDFDEDG) are compositionally biased toward acidic residues.

Belongs to the RRM HNRPC family. RALY subfamily.

The protein is RNA-binding Raly-like protein (RALYL) of Bos taurus (Bovine).